Reading from the N-terminus, the 695-residue chain is UvrABC system protein B (695 aa).

The 390-residue stretch at 45-434 (EGIEDGLSFQ…QVVEQVVRPT (390 aa)) folds into the Helicase ATP-binding domain. ATP is bound at residue 58–65 (GVTGSGKT). The Beta-hairpin motif lies at 111-134 (YYDYYQPEAYVPQRDLFIEKDSSI). One can recognise a Helicase C-terminal domain in the interval 449-602 (QVDDLLSEIN…QMAFNEANGI (154 aa)). The region spanning 646 to 681 (SKEIKRLEKLMMDHAKNLEFEKAAQVRDQLAKLKAQ) is the UVR domain.

It belongs to the UvrB family. Forms a heterotetramer with UvrA during the search for lesions. Interacts with UvrC in an incision complex.

The protein localises to the cytoplasm. In terms of biological role, the UvrABC repair system catalyzes the recognition and processing of DNA lesions. A damage recognition complex composed of 2 UvrA and 2 UvrB subunits scans DNA for abnormalities. Upon binding of the UvrA(2)B(2) complex to a putative damaged site, the DNA wraps around one UvrB monomer. DNA wrap is dependent on ATP binding by UvrB and probably causes local melting of the DNA helix, facilitating insertion of UvrB beta-hairpin between the DNA strands. Then UvrB probes one DNA strand for the presence of a lesion. If a lesion is found the UvrA subunits dissociate and the UvrB-DNA preincision complex is formed. This complex is subsequently bound by UvrC and the second UvrB is released. If no lesion is found, the DNA wraps around the other UvrB subunit that will check the other stand for damage. The polypeptide is UvrABC system protein B (Cupriavidus pinatubonensis (strain JMP 134 / LMG 1197) (Cupriavidus necator (strain JMP 134))).